A 182-amino-acid chain; its full sequence is ATP-dependent protease subunit HslV (182 aa).

T12 is an active-site residue. 3 residues coordinate Na(+): A167, C170, and T173.

It belongs to the peptidase T1B family. HslV subfamily. A double ring-shaped homohexamer of HslV is capped on each side by a ring-shaped HslU homohexamer. The assembly of the HslU/HslV complex is dependent on binding of ATP.

Its subcellular location is the cytoplasm. It catalyses the reaction ATP-dependent cleavage of peptide bonds with broad specificity.. With respect to regulation, allosterically activated by HslU binding. In terms of biological role, protease subunit of a proteasome-like degradation complex believed to be a general protein degrading machinery. The sequence is that of ATP-dependent protease subunit HslV from Pelodictyon phaeoclathratiforme (strain DSM 5477 / BU-1).